A 215-amino-acid chain; its full sequence is UPF0502 protein YceH (215 aa).

This sequence belongs to the UPF0502 family.

The protein is UPF0502 protein YceH of Salmonella paratyphi C (strain RKS4594).